We begin with the raw amino-acid sequence, 294 residues long: StAR-related lipid transfer protein 3 (294 aa).

One can recognise an MENTAL domain in the interval 1–66; that stretch reads DGYICNNGMD…YSPPESLAGS (66 aa). The short motif at 55-61 is the FFAT element; it reads QFYSPPE. The interval 58–77 is disordered; sequence SPPESLAGSEEDLDEEGLGR. One can recognise an START domain in the interval 79–292; that stretch reads AVSPQEKALV…LRQRIRDLRS (214 aa).

This sequence belongs to the STARD3 family. In terms of assembly, homodimer. Post-translationally, phosphorylated. Phosphorylation allows the tethering of two membranes that participates in the formation of ER-endosome contacts. Phosphorylation of FFAT motif drives membrane tethering between the endoplasmic reticulum and late endosomes that in turn allows the efficient transport of sterol mediated by the START domain.

It is found in the late endosome membrane. The enzyme catalyses cholesterol(in) = cholesterol(out). Functionally, sterol-binding protein that mediates cholesterol transport from the endoplasmic reticulum to endosomes. The sterol transport mechanism is triggered by phosphorylation of FFAT motif that leads to membrane tethering between the endoplasmic reticulum and late endosomes. Acts as a lipid transfer protein that redirects sterol to the endosome at the expense of the cell membrane and favors membrane formation inside endosomes. This Salvelinus fontinalis (Brook trout) protein is StAR-related lipid transfer protein 3.